Consider the following 236-residue polypeptide: Purine nucleoside phosphorylase DeoD-type (236 aa).

His-5 is an a purine D-ribonucleoside binding site. Residues Gly-21, Arg-25, Arg-44, and 88–91 contribute to the phosphate site; that span reads RIGS. Residues 180-182 and 204-205 contribute to the a purine D-ribonucleoside site; these read EME and SD. Asp-205 serves as the catalytic Proton donor.

This sequence belongs to the PNP/UDP phosphorylase family. Homohexamer; trimer of homodimers.

The enzyme catalyses a purine D-ribonucleoside + phosphate = a purine nucleobase + alpha-D-ribose 1-phosphate. The catalysed reaction is a purine 2'-deoxy-D-ribonucleoside + phosphate = a purine nucleobase + 2-deoxy-alpha-D-ribose 1-phosphate. Its function is as follows. Catalyzes the reversible phosphorolytic breakdown of the N-glycosidic bond in the beta-(deoxy)ribonucleoside molecules, with the formation of the corresponding free purine bases and pentose-1-phosphate. This Chromobacterium violaceum (strain ATCC 12472 / DSM 30191 / JCM 1249 / CCUG 213 / NBRC 12614 / NCIMB 9131 / NCTC 9757 / MK) protein is Purine nucleoside phosphorylase DeoD-type.